We begin with the raw amino-acid sequence, 468 residues long: 6-phospho-beta-galactosidase (468 aa).

5 residues coordinate D-galactose 6-phosphate: glutamine 19, histidine 116, asparagine 159, glutamate 160, and asparagine 297. The active-site Proton donor is glutamate 160. Glutamate 375 (nucleophile) is an active-site residue. The D-galactose 6-phosphate site is built by serine 428, tryptophan 429, lysine 435, and tyrosine 437.

This sequence belongs to the glycosyl hydrolase 1 family.

The catalysed reaction is a 6-phospho-beta-D-galactoside + H2O = D-galactose 6-phosphate + an alcohol. It participates in carbohydrate metabolism; lactose degradation; D-galactose 6-phosphate and beta-D-glucose from lactose 6-phosphate: step 1/1. The chain is 6-phospho-beta-galactosidase from Streptococcus pyogenes serotype M3 (strain ATCC BAA-595 / MGAS315).